A 169-amino-acid chain; its full sequence is Putative esterase F42H10.6 (169 aa).

This sequence belongs to the thioesterase paaI family.

This chain is Putative esterase F42H10.6, found in Caenorhabditis elegans.